The chain runs to 337 residues: F420-dependent glucose-6-phosphate dehydrogenase (337 aa).

Aspartate 40 contacts coenzyme F420-(gamma-Glu)n. Histidine 41 acts as the Proton donor in catalysis. Residues threonine 77 and threonine 108–glycine 109 each bind coenzyme F420-(gamma-Glu)n. The Proton acceptor role is filled by glutamate 110. Coenzyme F420-(gamma-Glu)n is bound by residues asparagine 113, glycine 178–glycine 179, and valine 181–valine 182. 4 residues coordinate substrate: threonine 196, lysine 199, lysine 260, and arginine 284.

Belongs to the F420-dependent glucose-6-phosphate dehydrogenase family. In terms of assembly, homodimer.

The enzyme catalyses oxidized coenzyme F420-(gamma-L-Glu)(n) + D-glucose 6-phosphate + H(+) = 6-phospho-D-glucono-1,5-lactone + reduced coenzyme F420-(gamma-L-Glu)(n). Its function is as follows. Catalyzes the coenzyme F420-dependent oxidation of glucose 6-phosphate (G6P) to 6-phosphogluconolactone. This chain is F420-dependent glucose-6-phosphate dehydrogenase, found in Rhodococcus hoagii (strain 103S) (Rhodococcus equi).